The sequence spans 509 residues: MEKAFDQYEVWFVTGAQLLYGGDAVIAVDAHSNEMVNGLNESGKLPVKVVYKGTANSSKEVEAVFKAANNDEKCIGVITWMHTFSPAKMWIHGLQQLKKPLLHLHTQFNKEIPWDTMDMDFMNLNQSAHGDREFGHICTRMRIRRKVVVGYWKDEDTQHKIAVWMRVCAGWADSQDMLIIRFGDQMNNVAVTDGDKVEAEQRMGYHVDYCPASELMKYHKNIKDTDVEALVATYFNEYDHDASLEDKSTEAYQKVWNAAKAELALRAILKAKGAKGFTTNFDDLGQTDGSYFDQIPGLASQRLMAEGYGFGAEGDWKSAALYRTVWVMNQGLSKGCSFLEDYTLNFDGANSAILQSHMLEVCPLIAASKPRLEVHFLGIGIRKSQTARLVFTSKVGSGCTATVVDLGNRFRLIVNDVECIESKPLPKLPVASALWIPMPNFEVGAGAWILAGGTHHSCFSYDLTAEYWEDYAEIAGIEMIRIDKDTTISNFKKELRMNEVYYMLNKALC.

Mn(2+) is bound by residues glutamate 313, glutamate 340, histidine 357, and histidine 456.

Belongs to the arabinose isomerase family. The cofactor is Mn(2+).

The enzyme catalyses beta-L-arabinopyranose = L-ribulose. It participates in carbohydrate degradation; L-arabinose degradation via L-ribulose; D-xylulose 5-phosphate from L-arabinose (bacterial route): step 1/3. Functionally, catalyzes the conversion of L-arabinose to L-ribulose. The polypeptide is L-arabinose isomerase (Phocaeicola vulgatus (strain ATCC 8482 / DSM 1447 / JCM 5826 / CCUG 4940 / NBRC 14291 / NCTC 11154) (Bacteroides vulgatus)).